Here is a 390-residue protein sequence, read N- to C-terminus: Protein dimmed (390 aa).

Positions 24-163 (HNNNNYNTDG…RNMRRLESNE (140 aa)) are disordered. Polar residues-rich tracts occupy residues 29 to 44 (YNTD…SAEG) and 55 to 64 (RTSQLSNNTY). Asparagine 61 carries an N-linked (GlcNAc...) asparagine glycan. A compositionally biased stretch (low complexity) spans 69–78 (TDSSSQSDDT). Over residues 79 to 90 (SGGGGSSNGGGS) the composition is skewed to gly residues. A compositionally biased stretch (low complexity) spans 122-141 (PSTIAPNSTSSNSSNANGNA). Residues asparagine 128, asparagine 133, and asparagine 140 are each glycosylated (N-linked (GlcNAc...) asparagine). Basic and acidic residues predominate over residues 151-163 (AKERNMRRLESNE). The bHLH domain occupies 156–208 (MRRLESNERERMRMHSLNDAFQSLREVIPHVEMERRLSKIETLTLAKNYIINL). N-linked (GlcNAc...) asparagine glycans are attached at residues asparagine 207 and asparagine 237. The interval 312–339 (QQQQASHLPHHQQAMHGHGHLGASIQSQ) is disordered. A glycan (N-linked (GlcNAc...) asparagine) is linked at asparagine 347.

Forms homodimers via the bHLH domain. These dimers bind the core E-box sequence. Detected in the developing nervous system in the bilateral domains in the cephalic region that later on forms part of the ring gland. Concomitantly expressed in the larval central nervous system (CNS), including the dorsal chain neurons as well as several bilateral clusters of neurons: large, midline protocerebral brain cells (MC), lateral protocerebral brain cells (LC), ventral subesophageal neurons (SE) and lateral abdominal neurons, and the transverse nerves. Outside the CNS, detected in at least three classes of endocrine cells: intrinsic cells of the corpora cardiaca, midgut cells, the Inka cells, lateral Bipolar neurons associated with the segmental transverse nerve, and several peptidergic cells of the enteric nervous system. Expressed only in central and peripheral neuroendocrine secretory cells and neurosecretory neurons but not in sensory or motor neurons.

It is found in the cytoplasm. Transcription factor that regulates neurosecretory (NS) cell function and neuroendocrine cell fate. Acts as a master regulator of common NS functions such as Phm expression and neuropeptide production. Plays a role as a regulator of peptide-containing large dense-core vesicle (LDCV) production and peptidergic cell differentiation. Controls transcription of FMRFamide in Tv neuronal cells and Fur1 in Ap-let cells (Tvb and dorsal apterous cells). Also required for up-regulation of Phm in Tv and Ap-let cells, and expression of three neuropeptide genes, Ms, FMRFamide and Lk. Influences both regulated and constitutive secretory activity in neuroendocrine cells at embryonic and postembryonic level. Loss of function studies show reduced cellular levels of various neuropeptides and neuropeptide biosynthetic enzymes. The sequence is that of Protein dimmed (dimm) from Drosophila melanogaster (Fruit fly).